Reading from the N-terminus, the 740-residue chain is MSSAVRIVEKQLDEILAIARNPAQIRNAGTLAHVDHGKTTTTDSLLMGAGLLSPKVAGKALAMDYVPIEQLRQMTVKAANISLYFEYGGKPYLINFVDTPGHVDFTGHVTRSLRVMDGGLVVVDAVEGVMTQTETVVRQALEEYVRPVLFINKIDRLIKELRLSPQEIQQRILSIVKDFNALIDMFAPPEFKDKWKIDPGKGQMAMGSALHKWGITIPMAQKAGIKFSNIVDAYEKGYVDKLAEEFPLYKTLLTMIIEHVPPPNVAQKYRIPRLWRGDLNSEVGKALLEADPNGPTVIAVSKVNKDPHAGLIATGRVFSGTIREGDEIYIIGRKMKKKVLQTYIYMGPTRIIVPYMPAGNIVALMGVDEARAGDTLVTPSLADIPPFERMRYISEPVVTVAIEPKNPAELARLVEALKDLVIEDPTLDLKIDQETGQILLSGVGTLHLEIATWLLKERTKVEFSVSPPLIRFRETVRERSQVWEGKSPNKHNRLYFYVEPLDETTVELIATREITEEQDPRERAKILREKAGWDTDEARGVWAIDDRYFNVIVDKTTGIQYLREIRDYIIQGFRWAMEAGPLAQEPIRGVKVVLVDAVVHEDPAHRGPAQIMPATKNAIFAAFLSARPTILEPLVRLDIKVAPDYIGAVTSVINKHRGKILDMTQQEYMAFLRAELPVLESFTISDELRAAAAGKIFWSMQFSRWAPYPESMLADFVKQLRKKKGLKEEIPKPTDFVEAF.

Positions 23 to 264 constitute a tr-type G domain; it reads AQIRNAGTLA…MIIEHVPPPN (242 aa). GTP is bound by residues 32-39, 98-102, and 152-155; these read AHVDHGKT, DTPGH, and NKID. Residue His605 is modified to Diphthamide.

Belongs to the TRAFAC class translation factor GTPase superfamily. Classic translation factor GTPase family. EF-G/EF-2 subfamily.

It localises to the cytoplasm. In terms of biological role, catalyzes the GTP-dependent ribosomal translocation step during translation elongation. During this step, the ribosome changes from the pre-translocational (PRE) to the post-translocational (POST) state as the newly formed A-site-bound peptidyl-tRNA and P-site-bound deacylated tRNA move to the P and E sites, respectively. Catalyzes the coordinated movement of the two tRNA molecules, the mRNA and conformational changes in the ribosome. This Pyrobaculum calidifontis (strain DSM 21063 / JCM 11548 / VA1) protein is Elongation factor 2.